The chain runs to 310 residues: TLC domain-containing protein 2 (310 aa).

The next 6 helical transmembrane spans lie at 6-26 (LLVA…LQLL), 40-60 (NIFV…VGLW), 79-99 (VLVA…LWNQ), 117-137 (CLST…SLLL), 167-187 (ASLA…SLWL), and 194-214 (LSLA…SISI). Positions 33–227 (RDRWMWRNIF…IRILTKDILQ (195 aa)) constitute a TLC domain.

This sequence belongs to the TLCD family.

It is found in the cell membrane. Functionally, regulates the composition and fluidity of the plasma membrane. Inhibits the incorporation of membrane-fluidizing phospholipids containing omega-3 long-chain polyunsaturated fatty acids (LCPUFA) and thereby promotes membrane rigidity. Does not appear to have any effect on LCPUFA synthesis. This is TLC domain-containing protein 2 (Tlcd2) from Mus musculus (Mouse).